The sequence spans 189 residues: MWKNGAMRGCNKETGEFLGPSRSQQRRTALEVLVLSEKLAALTPAQLAKLPIPERLLPHITETKRITSHIARKRQLAFLAKQMRREDDTTLEAIREKLNASGIQAQREVATLHRTEQWRKRLLEEGDSALTELLNQYPQADCGKLRQLLRNSKTEQARNKAPQAFRELYQVLHGLIITQNSDNQHQTPQ.

The tract at residues 1–22 (MWKNGAMRGCNKETGEFLGPSR) is disordered.

This sequence belongs to the DarP family.

The protein localises to the cytoplasm. In terms of biological role, member of a network of 50S ribosomal subunit biogenesis factors which assembles along the 30S-50S interface, preventing incorrect 23S rRNA structures from forming. Promotes peptidyl transferase center (PTC) maturation. The polypeptide is Dual-action ribosomal maturation protein DarP (Xylella fastidiosa (strain Temecula1 / ATCC 700964)).